A 220-amino-acid polypeptide reads, in one-letter code: MSVKIHYQNTHFITSAPDIRHLPEDEGIEIAFAGRSNAGKSSSLNRLTNQKNLAKTSKTPGRTQLINLFKVADGCHIVDLPGYGFAQVPLEMKLKWQRALGEYLQKRQSLKGLVVLMDIRHPMKDLDQQLIIWAVECGIPVQVMLTKADKLKSGARKAQVLKVREEAKTFGGDVAVDAFSSLSGIGVDTLRAKLDEWYAPMLAALAEQEEGEQPESSTDQ.

Positions 26-200 (EGIEIAFAGR…RAKLDEWYAP (175 aa)) constitute an EngB-type G domain. GTP contacts are provided by residues 34–41 (GRSNAGKS), 61–65 (GRTQL), 79–82 (DLPG), 146–149 (TKAD), and 179–181 (FSS). Positions 41 and 63 each coordinate Mg(2+).

It belongs to the TRAFAC class TrmE-Era-EngA-EngB-Septin-like GTPase superfamily. EngB GTPase family. It depends on Mg(2+) as a cofactor.

In terms of biological role, necessary for normal cell division and for the maintenance of normal septation. The chain is Probable GTP-binding protein EngB from Vibrio cholerae serotype O1 (strain ATCC 39315 / El Tor Inaba N16961).